The primary structure comprises 356 residues: S-adenosylmethionine:tRNA ribosyltransferase-isomerase (356 aa).

The protein belongs to the QueA family. In terms of assembly, monomer.

The protein localises to the cytoplasm. The enzyme catalyses 7-aminomethyl-7-carbaguanosine(34) in tRNA + S-adenosyl-L-methionine = epoxyqueuosine(34) in tRNA + adenine + L-methionine + 2 H(+). It participates in tRNA modification; tRNA-queuosine biosynthesis. Transfers and isomerizes the ribose moiety from AdoMet to the 7-aminomethyl group of 7-deazaguanine (preQ1-tRNA) to give epoxyqueuosine (oQ-tRNA). The sequence is that of S-adenosylmethionine:tRNA ribosyltransferase-isomerase from Nitrosospira multiformis (strain ATCC 25196 / NCIMB 11849 / C 71).